The chain runs to 347 residues: MQIEKKDIRALSKDQLRDFFVINKDKAFRGNQVYEWLWSKGAHSFEDMTNVSKGTRQMLVENFVINHIKVDTMQRSSDGTVKNAVRLHDGLIVESVLIPTETRTTACVSSQVGCSLDCNFCATARLKRMRNLEPGEIYDQVLAIDRESKLYFNRPLSNIVFMGMGEPLMNYNNVIKAIDMITSSEGLGMSPKRITVSTSGVSKMIKKMADDEVKFKLAVSLHSAVEEIRNKIMPFTKSFPLPELREALQYWYHKTKSKITYEYVVWKGINDNKESVDALVKFCKHVPCKVNLIEYNPIDDGEFQQASPESINAYIKALEANGIIAKVRHSRGKDIDAACGQLANKEI.

Catalysis depends on glutamate 94, which acts as the Proton acceptor. The region spanning threonine 100–aspartate 334 is the Radical SAM core domain. Cysteine 107 and cysteine 339 are joined by a disulfide. [4Fe-4S] cluster is bound by residues cysteine 114, cysteine 118, and cysteine 121. S-adenosyl-L-methionine is bound by residues glycine 165–glutamate 166, serine 197, serine 220–histidine 222, and asparagine 296. Cysteine 339 acts as the S-methylcysteine intermediate in catalysis.

This sequence belongs to the radical SAM superfamily. RlmN family. [4Fe-4S] cluster serves as cofactor.

Its subcellular location is the cytoplasm. The enzyme catalyses adenosine(2503) in 23S rRNA + 2 reduced [2Fe-2S]-[ferredoxin] + 2 S-adenosyl-L-methionine = 2-methyladenosine(2503) in 23S rRNA + 5'-deoxyadenosine + L-methionine + 2 oxidized [2Fe-2S]-[ferredoxin] + S-adenosyl-L-homocysteine. The catalysed reaction is adenosine(37) in tRNA + 2 reduced [2Fe-2S]-[ferredoxin] + 2 S-adenosyl-L-methionine = 2-methyladenosine(37) in tRNA + 5'-deoxyadenosine + L-methionine + 2 oxidized [2Fe-2S]-[ferredoxin] + S-adenosyl-L-homocysteine. Specifically methylates position 2 of adenine 2503 in 23S rRNA and position 2 of adenine 37 in tRNAs. This Flavobacterium psychrophilum (strain ATCC 49511 / DSM 21280 / CIP 103535 / JIP02/86) protein is Probable dual-specificity RNA methyltransferase RlmN.